Reading from the N-terminus, the 525-residue chain is GMP synthase [glutamine-hydrolyzing] (525 aa).

Residues 13–202 form the Glutamine amidotransferase type-1 domain; that stretch reads TILVLDFGSQ…AVEICQAAQT (190 aa). Cys89 functions as the Nucleophile in the catalytic mechanism. Active-site residues include His176 and Glu178. The GMPS ATP-PPase domain maps to 203-400; sequence WTMENFIDTE…LGISHELVWR (198 aa). 231–237 provides a ligand contact to ATP; it reads SGGVDST. 4 residues coordinate XMP: Arg304, Asp462, Lys517, and Glu523.

As to quaternary structure, homodimer. It depends on Mg(2+) as a cofactor.

It localises to the cytoplasm. The protein resides in the cytosol. The catalysed reaction is XMP + L-glutamine + ATP + H2O = GMP + L-glutamate + AMP + diphosphate + 2 H(+). The protein operates within purine metabolism; GMP biosynthesis; GMP from XMP (L-Gln route): step 1/1. In terms of biological role, catalyzes the conversion of xanthine monophosphate (XMP) to GMP in the presence of glutamine and ATP through an adenyl-XMP intermediate. The polypeptide is GMP synthase [glutamine-hydrolyzing] (GUA1) (Eremothecium gossypii (strain ATCC 10895 / CBS 109.51 / FGSC 9923 / NRRL Y-1056) (Yeast)).